The primary structure comprises 1164 residues: DNA-directed RNA polymerase subunit beta (1164 aa).

The protein belongs to the RNA polymerase beta chain family. As to quaternary structure, the RNAP catalytic core consists of 2 alpha, 1 beta, 1 beta' and 1 omega subunit. When a sigma factor is associated with the core the holoenzyme is formed, which can initiate transcription.

It carries out the reaction RNA(n) + a ribonucleoside 5'-triphosphate = RNA(n+1) + diphosphate. In terms of biological role, DNA-dependent RNA polymerase catalyzes the transcription of DNA into RNA using the four ribonucleoside triphosphates as substrates. This is DNA-directed RNA polymerase subunit beta from Saccharopolyspora erythraea (strain ATCC 11635 / DSM 40517 / JCM 4748 / NBRC 13426 / NCIMB 8594 / NRRL 2338).